Consider the following 148-residue polypeptide: Large ribosomal subunit protein bL9 (148 aa).

Belongs to the bacterial ribosomal protein bL9 family.

In terms of biological role, binds to the 23S rRNA. In Bifidobacterium longum (strain DJO10A), this protein is Large ribosomal subunit protein bL9.